The sequence spans 619 residues: Chaperone protein HscA homolog (619 aa).

This sequence belongs to the heat shock protein 70 family.

Its function is as follows. Chaperone involved in the maturation of iron-sulfur cluster-containing proteins. Has a low intrinsic ATPase activity which is markedly stimulated by HscB. The sequence is that of Chaperone protein HscA homolog from Laribacter hongkongensis (strain HLHK9).